Reading from the N-terminus, the 78-residue chain is Delta-conotoxin TxVIA (78 aa).

The first 22 residues, 1–22 (MKLTCMMIVAVLFLTAWTFATA), serve as a signal peptide directing secretion. A propeptide spanning residues 23-49 (DDPRNGLGNLFSNAHHEMKNPEASKLN) is cleaved from the precursor. Intrachain disulfides connect Cys53/Cys68, Cys60/Cys72, and Cys67/Cys77. Met59 is subject to Methionine sulfoxide; partial.

Belongs to the conotoxin O1 superfamily. As to expression, expressed by the venom duct.

It localises to the secreted. Its function is as follows. Delta-conotoxins bind to site 6 of voltage-gated sodium channels (Nav) and inhibit the inactivation process. Binding of this toxin is strongly calcium-dependent but not voltage-dependent. The binding site is most likely on the extracellular side of the sodium channel. Binds receptor sites on both mollusk and rat central nervous system, but despite its high affinity binding to rat sodium channel, it has no functional effect in vivo and in vitro on it. Also has no effect on Gambusia fish. Is important in mollusk for the paralysis of the prey. Upon injection of the peptide, a subordinate lobster assumes an exaggerated dominant posture (of a 'King-Kong' lobster!). The sequence is that of Delta-conotoxin TxVIA from Conus textile (Cloth-of-gold cone).